The following is a 386-amino-acid chain: Succinate--CoA ligase [ADP-forming] subunit beta (386 aa).

An ATP-grasp domain is found at 9 to 244; it reads KEILRSYGVS…LDEEDPKEVE (236 aa). ATP is bound by residues K46, 53-55, E99, C102, and E107; that span reads GRG. Positions 199 and 213 each coordinate Mg(2+). Substrate-binding positions include N264 and 321–323; that span reads GIM.

Belongs to the succinate/malate CoA ligase beta subunit family. In terms of assembly, heterotetramer of two alpha and two beta subunits. The cofactor is Mg(2+).

The enzyme catalyses succinate + ATP + CoA = succinyl-CoA + ADP + phosphate. It carries out the reaction GTP + succinate + CoA = succinyl-CoA + GDP + phosphate. It functions in the pathway carbohydrate metabolism; tricarboxylic acid cycle; succinate from succinyl-CoA (ligase route): step 1/1. In terms of biological role, succinyl-CoA synthetase functions in the citric acid cycle (TCA), coupling the hydrolysis of succinyl-CoA to the synthesis of either ATP or GTP and thus represents the only step of substrate-level phosphorylation in the TCA. The beta subunit provides nucleotide specificity of the enzyme and binds the substrate succinate, while the binding sites for coenzyme A and phosphate are found in the alpha subunit. This Geobacillus kaustophilus (strain HTA426) protein is Succinate--CoA ligase [ADP-forming] subunit beta.